Consider the following 231-residue polypeptide: Large ribosomal subunit protein uL1 (231 aa).

This sequence belongs to the universal ribosomal protein uL1 family. In terms of assembly, part of the 50S ribosomal subunit.

Functionally, binds directly to 23S rRNA. The L1 stalk is quite mobile in the ribosome, and is involved in E site tRNA release. Its function is as follows. Protein L1 is also a translational repressor protein, it controls the translation of the L11 operon by binding to its mRNA. This is Large ribosomal subunit protein uL1 from Ralstonia nicotianae (strain ATCC BAA-1114 / GMI1000) (Ralstonia solanacearum).